The sequence spans 116 residues: Endocuticle structural glycoprotein SgAbd-4 (116 aa).

Residue glutamine 1 is modified to Pyrrolidone carboxylic acid. In terms of domain architecture, Chitin-binding type R&amp;R spans 20–92; the sequence is DGSYQWNYET…PQGAHFPTPP (73 aa). 2 O-linked (HexNAc...) threonine glycosylation sites follow: threonine 90 and threonine 107. An O-linked (HexNAc...) serine glycan is attached at serine 110. Threonine 111 carries O-linked (HexNAc...) threonine glycosylation. Position 116 is a proline amide (proline 116).

In terms of biological role, component of the abdominal endocuticle. This is Endocuticle structural glycoprotein SgAbd-4 from Schistocerca gregaria (Desert locust).